We begin with the raw amino-acid sequence, 478 residues long: Putative malate transporter YflS (478 aa).

12 helical membrane-spanning segments follow: residues 12 to 31 (AVKL…IWFI), 41 to 57 (AWHL…GFIS), 64 to 81 (AIAI…TLSI), 96 to 118 (IVIA…ISYV), 187 to 209 (GFQG…PLIA), 222 to 244 (WTSW…PLVI), 277 to 296 (LSMV…GGSF), 300 to 319 (ATTT…VLTW), 332 to 354 (LTWF…VSWF), 364 to 386 (GFSW…YFFA), 398 to 420 (AFLA…LAFI), and 450 to 472 (WSIG…GLWW).

Belongs to the SLC13A/DASS transporter (TC 2.A.47) family. DIT1 subfamily.

The protein localises to the cell membrane. Functionally, might be a malate transporter. This is Putative malate transporter YflS (yflS) from Bacillus subtilis (strain 168).